Here is a 421-residue protein sequence, read N- to C-terminus: Diaminopimelate decarboxylase (421 aa).

Residue Lys63 is modified to N6-(pyridoxal phosphate)lysine. Residues Gly242 and 278-281 (EPGR) contribute to the pyridoxal 5'-phosphate site. Arg281, Arg317, and Tyr321 together coordinate substrate. Cys346 functions as the Proton donor in the catalytic mechanism. Substrate contacts are provided by Glu347 and Tyr375. Tyr375 is a pyridoxal 5'-phosphate binding site.

Belongs to the Orn/Lys/Arg decarboxylase class-II family. LysA subfamily. Homodimer. It depends on pyridoxal 5'-phosphate as a cofactor.

The enzyme catalyses meso-2,6-diaminopimelate + H(+) = L-lysine + CO2. It participates in amino-acid biosynthesis; L-lysine biosynthesis via DAP pathway; L-lysine from DL-2,6-diaminopimelate: step 1/1. Its function is as follows. Specifically catalyzes the decarboxylation of meso-diaminopimelate (meso-DAP) to L-lysine. The chain is Diaminopimelate decarboxylase from Zymomonas mobilis subsp. mobilis (strain ATCC 31821 / ZM4 / CP4).